The following is a 71-amino-acid chain: MKQGIHPKYEEVTANCSCGNVIKIRSTVGHDLNLDVCGECHPFYTGKQRDVATGGRVDRFNKRFSVPGAKK.

4 residues coordinate Zn(2+): Cys16, Cys18, Cys37, and Cys40.

The protein belongs to the bacterial ribosomal protein bL31 family. Type A subfamily. Part of the 50S ribosomal subunit. Zn(2+) serves as cofactor.

Functionally, binds the 23S rRNA. The protein is Large ribosomal subunit protein bL31 of Serratia proteamaculans (strain 568).